The following is a 251-amino-acid chain: 5'-nucleotidase SurE (251 aa).

4 residues coordinate a divalent metal cation: Asp-9, Asp-10, Ser-40, and Asn-94.

This sequence belongs to the SurE nucleotidase family. Requires a divalent metal cation as cofactor.

Its subcellular location is the cytoplasm. The catalysed reaction is a ribonucleoside 5'-phosphate + H2O = a ribonucleoside + phosphate. Nucleotidase that shows phosphatase activity on nucleoside 5'-monophosphates. This is 5'-nucleotidase SurE from Aquifex aeolicus (strain VF5).